Here is a 114-residue protein sequence, read N- to C-terminus: UPF0342 protein LCABL_19440 (114 aa).

This sequence belongs to the UPF0342 family.

The protein is UPF0342 protein LCABL_19440 of Lacticaseibacillus casei (strain BL23) (Lactobacillus casei).